A 244-amino-acid chain; its full sequence is Lymphotoxin-beta (244 aa).

At 1 to 18 (MGALGLEGRGGRLQGRGS) the chain is on the cytoplasmic side. Residues 19-48 (LLLAVAGATSLVTLLLAVPITVLAVLALVP) traverse the membrane as a helical; Signal-anchor for type II membrane protein segment. The Extracellular segment spans residues 49–244 (QDQGGLVTDT…KTFFGAVMVG (196 aa)). The THD domain occupies 88–243 (PAAHLIGAPL…GKTFFGAVMV (156 aa)). Asn-222 is a glycosylation site (N-linked (GlcNAc...) asparagine).

The protein belongs to the tumor necrosis factor family. Heterotrimer of either two LTB and one LTA subunits or (less prevalent) two LTA and one LTB subunits.

The protein localises to the membrane. In terms of biological role, cytokine that binds to LTBR/TNFRSF3. May play a specific role in immune response regulation. Provides the membrane anchor for the attachment of the heterotrimeric complex to the cell surface. This is Lymphotoxin-beta (LTB) from Macaca mulatta (Rhesus macaque).